Consider the following 713-residue polypeptide: Catalase-peroxidase (713 aa).

Residues 77–200 (WHSAGTYRTT…LGATVMGLIY (124 aa)) constitute a cross-link (tryptophyl-tyrosyl-methioninium (Trp-Tyr) (with M-226)). His-78 acts as the Proton acceptor in catalysis. Positions 200–226 (YVNPEGPDGEPDLEGSAANIRESFGRM) form a cross-link, tryptophyl-tyrosyl-methioninium (Tyr-Met) (with W-77). His-241 provides a ligand contact to heme b.

Belongs to the peroxidase family. Peroxidase/catalase subfamily. As to quaternary structure, homodimer or homotetramer. It depends on heme b as a cofactor. Post-translationally, formation of the three residue Trp-Tyr-Met cross-link is important for the catalase, but not the peroxidase activity of the enzyme.

The enzyme catalyses H2O2 + AH2 = A + 2 H2O. It catalyses the reaction 2 H2O2 = O2 + 2 H2O. Functionally, bifunctional enzyme with both catalase and broad-spectrum peroxidase activity. The polypeptide is Catalase-peroxidase (Natronomonas pharaonis (strain ATCC 35678 / DSM 2160 / CIP 103997 / JCM 8858 / NBRC 14720 / NCIMB 2260 / Gabara) (Halobacterium pharaonis)).